We begin with the raw amino-acid sequence, 209 residues long: MDRNFLLTVTLICIVVAGVGGQSPISSPTKSPTTPSAPTTSPTKSPAVTSPTTAPAKTPTASASSPVESPKSPAPVSESSPPPTPVPESSPPVPAPMVSSPVSSPPVPAPVADSPPAPVAAPVADVPAPAPSKHKKTTKKSKKHQAAPAPAPELLGPPAPPTESPGPNSDAFSPGPSADDQSGAASTRVLRNVAVGAVATAWAVLVMAF.

The N-terminal stretch at 1 to 21 is a signal peptide; the sequence is MDRNFLLTVTLICIVVAGVGG. The disordered stretch occupies residues 21-185; sequence GQSPISSPTK…PSADDQSGAA (165 aa). Residues 23–79 show a composition bias toward low complexity; the sequence is SPISSPTKSPTTPSAPTTSPTKSPAVTSPTTAPAKTPTASASSPVESPKSPAPVSES. Pro residues-rich tracts occupy residues 80–95 and 103–119; these read SPPP…PVPA and SSPP…PAPV. Positions 132–145 are enriched in basic residues; it reads SKHKKTTKKSKKHQ. The segment covering 149–164 has biased composition (pro residues); it reads APAPELLGPPAPPTES. A lipid anchor (GPI-anchor amidated glycine) is attached at Gly-183. Positions 184–209 are cleaved as a propeptide — removed in mature form; the sequence is AASTRVLRNVAVGAVATAWAVLVMAF.

This sequence belongs to the lysine-rich AGP family. O-glycosylated on the hydroxyproline residues. As to expression, predominantly expressed in flowers, and moderately expressed in roots, stems and young leaves.

The protein resides in the cell membrane. Functionally, proteoglycan that seems to be implicated in diverse developmental roles such as differentiation, cell-cell recognition, embryogenesis and programmed cell death. This Arabidopsis thaliana (Mouse-ear cress) protein is Lysine-rich arabinogalactan protein 18 (AGP18).